A 343-amino-acid chain; its full sequence is Envelope glycoprotein K (343 aa).

The N-terminal stretch at 1–31 (MLLGGRTAYLSVLGLITAYAAFTIWYTLTAQ) is a signal peptide. Over 32 to 118 (LHNPCVYATV…VVGTRNCRAY (87 aa)) the chain is Extracellular. 2 N-linked (GlcNAc...) asparagine; by host glycosylation sites follow: Asn57 and Asn89. A helical membrane pass occupies residues 119 to 139 (LWSVQLQMITGAWLIYIAFLC). The Cytoplasmic segment spans residues 140–213 (LRQERRLLGP…DPIGFLCEHS (74 aa)). The chain crosses the membrane as a helical span at residues 214–234 (AALALIGLEVGTHFVARLLVV). Over 235 to 251 (GTVTLVHTPCSQIYPIY) the chain is Extracellular. Residues 252-272 (LKLASWGFVVAVTIVEIVAII) form a helical membrane-spanning segment. Residues 273 to 303 (YEKPPKTGSSANPPTPATHGVKGLCTSCCST) are Cytoplasmic-facing. The helical transmembrane segment at 304 to 324 (VLANLCGKLVYLLLVIGAVSI) threads the bilayer. The Extracellular segment spans residues 325 to 343 (LLHYEQRIQIGLLGESFSS).

The protein belongs to the alphaherpesvirinae glycoprotein K family. As to quaternary structure, interacts (via UL20 interaction region) with protein UL20 homolog (via N-terminus); this interaction probably plays a role in the coordinate transport of protein UL20 homolog and gK to the trans-Golgi network (TGN), and is required for the cell surface expression of gK. Post-translationally, N-glycosylated.

It localises to the host cell membrane. The protein resides in the host endosome membrane. The protein localises to the host Golgi apparatus membrane. Glycoprotein that probably modulates membrane fusion events during secondary envelopment of cytoplasmic capsids that bud into specific trans-Golgi network (TGN)-derived membranes. The polypeptide is Envelope glycoprotein K (gK) (Equine herpesvirus 1 (strain Ab4p) (EHV-1)).